The following is a 164-amino-acid chain: Cytochrome c-type biogenesis protein CcmE (164 aa).

Over 1–8 the chain is Cytoplasmic; sequence MNPRRKSR. The chain crosses the membrane as a helical; Signal-anchor for type II membrane protein span at residues 9–29; the sequence is LYLAIVVLIGVALTATLMLYA. Residues 30–164 lie on the Periplasmic side of the membrane; the sequence is LRSNIDLFYT…ATPQNEGAKS (135 aa). Heme is bound by residues His-130 and Tyr-134. Residues 131-148 show a composition bias toward basic and acidic residues; sequence DEKYTPPEVADAMKENHK. Positions 131–164 are disordered; sequence DEKYTPPEVADAMKENHKGPASAYATPQNEGAKS. Over residues 155 to 164 the composition is skewed to polar residues; that stretch reads ATPQNEGAKS.

The protein belongs to the CcmE/CycJ family.

It is found in the cell inner membrane. Heme chaperone required for the biogenesis of c-type cytochromes. Transiently binds heme delivered by CcmC and transfers the heme to apo-cytochromes in a process facilitated by CcmF and CcmH. The chain is Cytochrome c-type biogenesis protein CcmE from Serratia proteamaculans (strain 568).